Reading from the N-terminus, the 290-residue chain is N-acetylneuraminate lyase (290 aa).

Aceneuramate-binding residues include serine 44 and threonine 45. Catalysis depends on tyrosine 133, which acts as the Proton donor. Residue lysine 161 is the Schiff-base intermediate with substrate of the active site. Threonine 163, glycine 185, aspartate 187, glutamate 188, and serine 204 together coordinate aceneuramate.

Belongs to the DapA family. NanA subfamily. As to quaternary structure, homotetramer.

It localises to the cytoplasm. The catalysed reaction is aceneuramate = aldehydo-N-acetyl-D-mannosamine + pyruvate. It functions in the pathway amino-sugar metabolism; N-acetylneuraminate degradation; D-fructose 6-phosphate from N-acetylneuraminate: step 1/5. Functionally, catalyzes the reversible aldol cleavage of N-acetylneuraminic acid (sialic acid; Neu5Ac) to form pyruvate and N-acetylmannosamine (ManNAc) via a Schiff base intermediate. The sequence is that of N-acetylneuraminate lyase from Fusobacterium nucleatum subsp. nucleatum (strain ATCC 25586 / DSM 15643 / BCRC 10681 / CIP 101130 / JCM 8532 / KCTC 2640 / LMG 13131 / VPI 4355).